The chain runs to 425 residues: Synaptotagmin-4 (425 aa).

Topologically, residues 1–16 are vesicular; it reads MAPITTSRVEFDEIPT. A helical transmembrane segment spans residues 17 to 37; it reads VVGIFSAFGLVFTVSLFAWIC. Residues 38–425 are Cytoplasmic-facing; sequence CQRRSAKSNK…IAKWHMLCDG (388 aa). Disordered stretches follow at residues 102-121 and 126-147; these read NGNF…LENV and FPET…SLTS. Over residues 105–119 the composition is skewed to polar residues; that stretch reads FPKTNPKAGSSSDLE. Serine 135 carries the post-translational modification Phosphoserine; by MAPK8. The segment covering 137 to 146 has biased composition (low complexity); sequence ESLKSSTSLT. 2 C2 domains span residues 153 to 274 and 287 to 420; these read KLGT…MLMT and GRGE…AKWH. Residues aspartate 246, serine 249, and aspartate 252 each coordinate Ca(2+).

Belongs to the synaptotagmin family. Interacts with KIF1A; the interaction increases in presence of calcium and decreases when SYT4 is phosphorylated at Ser-135. Ca(2+) serves as cofactor. Post-translationally, phosphorylation at Ser-135 by MAPK8/JNK1 reduces interaction with KIF1A and neuronal dense core vesicles mobility. Widely expressed. Expressed in the brain. Expressed in pituitary gland, cerebellum, cortex, hypothalamus and hippocampus.

Its subcellular location is the cytoplasmic vesicle. It localises to the secretory vesicle. It is found in the neuronal dense core vesicle membrane. Its function is as follows. Synaptotagmin family member which does not bind Ca(2+). Involved in neuronal dense core vesicles (DCVs) mobility through its interaction with KIF1A. Upon increased neuronal activity, phosphorylation by MAPK8/JNK1 destabilizes the interaction with KIF1A and captures DCVs to synapses. Plays a role in dendrite formation by melanocytes. This is Synaptotagmin-4 (Syt4) from Rattus norvegicus (Rat).